Consider the following 269-residue polypeptide: Phosphatidylglycerol--prolipoprotein diacylglyceryl transferase (269 aa).

Transmembrane regions (helical) follow at residues 21-41 (WYGI…VLEG), 54-74 (LLLY…VVFE), and 88-108 (IWDG…VILI). Residue arginine 136 coordinates a 1,2-diacyl-sn-glycero-3-phospho-(1'-sn-glycerol). Transmembrane regions (helical) follow at residues 206-226 (GEVV…IEGM) and 236-256 (LRVS…AIFY).

This sequence belongs to the Lgt family.

It is found in the cell membrane. It carries out the reaction L-cysteinyl-[prolipoprotein] + a 1,2-diacyl-sn-glycero-3-phospho-(1'-sn-glycerol) = an S-1,2-diacyl-sn-glyceryl-L-cysteinyl-[prolipoprotein] + sn-glycerol 1-phosphate + H(+). It functions in the pathway protein modification; lipoprotein biosynthesis (diacylglyceryl transfer). In terms of biological role, catalyzes the transfer of the diacylglyceryl group from phosphatidylglycerol to the sulfhydryl group of the N-terminal cysteine of a prolipoprotein, the first step in the formation of mature lipoproteins. This is Phosphatidylglycerol--prolipoprotein diacylglyceryl transferase from Ligilactobacillus salivarius (strain UCC118) (Lactobacillus salivarius).